Here is a 164-residue protein sequence, read N- to C-terminus: OV-17 antigen (164 aa).

The N-terminal stretch at 1 to 16 is a signal peptide; it reads MKFVILLTIGLLVVAA. The interval 24–43 is disordered; it reads QQQQQQQQQRDEREIPPFLE.

The protein belongs to the SXP/RAL-2 family. As to expression, high levels in the hypodermal layer of the adult female.

The polypeptide is OV-17 antigen (OV17) (Onchocerca volvulus).